The sequence spans 980 residues: SLIT and NTRK-like protein 3 (980 aa).

The signal sequence occupies residues 1-27 (MMKPSIAEMLHRGRMLWIILLSTIALG). Topologically, residues 30–655 (TPIPLIEDSE…SPPGGPVPLS (626 aa)) are extracellular. An N-linked (GlcNAc...) asparagine glycan is attached at Asn-69. 6 LRR repeats span residues 79–100 (RPFKLYLQRNSMRRLYTNSFLH), 103–124 (NAVSINLGNNALQDIQTGAFNG), 127–148 (ILKRLYLHENKLDVFRNDTFLG), 151–172 (SLEYLQADYNVIKRIESGAFRN), 175–196 (KLRVLILNDNLIPVLPTNLFKA), and 198–219 (SLTHLDLRGNRLKVLFYRGMLD). Residues 233–284 (NPWNCTCEIVQLKSWLERIPYTALVGDITCETPFHFHGKDLREIKKTELCPL) enclose the LRRCT 1 domain. Residues 326-361 (EYKSSNKQPKPTKQPRTPRPPSTSQALYPGPNQPPI) are disordered. Residues 365–407 (QTRPPIPIICPTGCTCNLHINDLGLTVNCKERGFNNISELLPR) enclose the LRRNT domain. LRR repeat units follow at residues 410–431 (NAKKLYLSSNLIQKIYRSDFWN), 434–455 (SLDLLHLGNNRISYVQDGAFIN), 458–479 (NLKSLFLNGNDIEKLTPGMFRG), 482–503 (SLHYLYFEFNVIREIQPAAFSL), 506–527 (NLKLLFLNNNLLRTLPTDAFAG), and 529–550 (SLARLNLRKNYFLYLPVAGVLE). The LRRCT 2 domain maps to 563 to 614 (NPWDCTCDLVPFKQWIETISSVSVVGDVLCRTPENLTHRDVRTIELEVLCPE). Residue Asn-597 is glycosylated (N-linked (GlcNAc...) asparagine). Positions 622–644 (GPSPPQPGDYHPNGGPTSASPYE) are disordered. The helical transmembrane segment at 656 to 676 (VLILSLLVLFFSAVFVAAGLF) threads the bilayer. Residues 677–980 (AYVLRRRRKK…EVLEKTAYRF (304 aa)) are Cytoplasmic-facing. 2 disordered regions span residues 709-735 (LFEDSGGNSGGSGGGGRPTLSSPEKAP) and 762-785 (EEEVAASAAQDTGATDRGGPGTQP). A compositionally biased stretch (gly residues) spans 715 to 725 (GNSGGSGGGGR).

Belongs to the SLITRK family. Broadly expressed in embryonic brain with highest expression in cortical plate, pyramidal cell layer of the hippocampus, thalamus and hypothalamus.

The protein resides in the membrane. Suppresses neurite outgrowth. This chain is SLIT and NTRK-like protein 3 (Slitrk3), found in Mus musculus (Mouse).